A 433-amino-acid polypeptide reads, in one-letter code: Glutamate-1-semialdehyde 2,1-aminomutase (433 aa).

Lysine 271 carries the N6-(pyridoxal phosphate)lysine modification.

This sequence belongs to the class-III pyridoxal-phosphate-dependent aminotransferase family. HemL subfamily. Homodimer. Requires pyridoxal 5'-phosphate as cofactor.

It is found in the cytoplasm. The catalysed reaction is (S)-4-amino-5-oxopentanoate = 5-aminolevulinate. The protein operates within porphyrin-containing compound metabolism; protoporphyrin-IX biosynthesis; 5-aminolevulinate from L-glutamyl-tRNA(Glu): step 2/2. It functions in the pathway porphyrin-containing compound metabolism; chlorophyll biosynthesis. The polypeptide is Glutamate-1-semialdehyde 2,1-aminomutase (Prochlorococcus marinus (strain MIT 9301)).